An 859-amino-acid chain; its full sequence is Cadherin-related family member 1 (859 aa).

An N-terminal signal peptide occupies residues 1 to 19 (MRRCRWAALALGLLRLCLA). Topologically, residues 20-700 (QANFAPHFFD…LIQTKDNPMK (681 aa)) are extracellular. Cadherin domains follow at residues 36-135 (NGNM…APRF), 136-246 (IQEP…APVF), 247-353 (VGTP…PPTF), 359-472 (PQNR…VPKF), 473-576 (DSLY…PPQF), and 573-688 (PPQF…SPMA). N-linked (GlcNAc...) asparagine glycosylation is found at N58 and N89. N296 carries an N-linked (GlcNAc...) asparagine glycan. A helical transmembrane segment spans residues 701-721 (AVGVLAGTMATVVAITVLIST). At 722-859 (ATFWRNKKSN…KKSVHNKAYF (138 aa)) the chain is on the cytoplasmic side. The tract at residues 770–838 (KEKPPNENCN…PKTMGSPVQS (69 aa)) is disordered. Residues 775 to 791 (NENCNNNSPESSLLPRA) show a composition bias toward low complexity.

Interacts with PROM1. Undergoes proteolytic cleavage; produces a soluble 95 kDa N-terminal fragment and a 25 kDa cell-associated C-terminal fragment.

The protein resides in the cell membrane. Potential calcium-dependent cell-adhesion protein. May be required for the structural integrity of the outer segment (OS) of photoreceptor cells. The chain is Cadherin-related family member 1 from Homo sapiens (Human).